We begin with the raw amino-acid sequence, 445 residues long: Succinate--CoA ligase [ADP-forming] subunit beta, mitochondrial (445 aa).

The transit peptide at 1–17 directs the protein to the mitochondrion; the sequence is MLSNIVKKTIQSSKNLK. One can recognise an ATP-grasp domain in the interval 43–270; it reads QKMMKSYGIN…DNAAFRHPDI (228 aa). ATP-binding positions include K80 and 87–89; that span reads GRG. Positions 240 and 254 each coordinate Mg(2+). Substrate-binding positions include N305 and 362 to 364; that span reads GIM.

This sequence belongs to the succinate/malate CoA ligase beta subunit family. ATP-specific subunit beta subfamily. As to quaternary structure, heterodimer of an alpha and a beta subunit. The beta subunit determines specificity for ATP. The cofactor is Mg(2+).

It is found in the mitochondrion. The enzyme catalyses succinate + ATP + CoA = succinyl-CoA + ADP + phosphate. The protein operates within carbohydrate metabolism; tricarboxylic acid cycle; succinate from succinyl-CoA (ligase route): step 1/1. Its function is as follows. ATP-specific succinyl-CoA synthetase functions in the citric acid cycle (TCA), coupling the hydrolysis of succinyl-CoA to the synthesis of ATP and thus represents the only step of substrate-level phosphorylation in the TCA. The beta subunit provides nucleotide specificity of the enzyme and binds the substrate succinate, while the binding sites for coenzyme A and phosphate are found in the alpha subunit. The polypeptide is Succinate--CoA ligase [ADP-forming] subunit beta, mitochondrial (scsC) (Dictyostelium discoideum (Social amoeba)).